The sequence spans 156 residues: Transcription elongation factor GreA (156 aa).

Residues 2 to 27 adopt a coiled-coil conformation; the sequence is EKTFPMTKEGLDKLKAELENLKLVKR.

This sequence belongs to the GreA/GreB family.

Its function is as follows. Necessary for efficient RNA polymerase transcription elongation past template-encoded arresting sites. The arresting sites in DNA have the property of trapping a certain fraction of elongating RNA polymerases that pass through, resulting in locked ternary complexes. Cleavage of the nascent transcript by cleavage factors such as GreA or GreB allows the resumption of elongation from the new 3'terminus. GreA releases sequences of 2 to 3 nucleotides. This Lactococcus lactis subsp. cremoris (strain MG1363) protein is Transcription elongation factor GreA.